The following is a 318-amino-acid chain: Pyrroline-5-carboxylate reductase ucsG (318 aa).

The protein belongs to the pyrroline-5-carboxylate reductase family.

Its pathway is mycotoxin biosynthesis. Functionally, pyrroline-5-carboxylate reductase; part of the gene cluster that mediates the biosynthesis of UCS1025A, a member of the pyrrolizidinone family that acts as a strong telomerase inhibitor and displays potent antibacterial and antitumor properties. These compounds share a hemiaminal-containing pyrrolizidinone core fused with a gamma-lactone, giving a furopyrrolizidine that is connected to a decalin fragment. The polyketide synthase module (PKS) of the PKS-NRPS ucsA is responsible for the synthesis of the polyketide backbone via the condensation of an acetyl-CoA starter unit with 6 malonyl-CoA units. The downstream nonribosomal peptide synthetase (NRPS) module then amidates the carboxyl end of the polyketide with a 2S,3S-methylproline derived from L-isoleucine by the 2-oxoglutarate-dependent dioxygenase ucsF which converts L-isoleucine to (4S,5S)-4-methylpyrroline-5-carboxylate that is further converted to 2S,3S-methylproline by the pyrroline-5-carboxylate reductase ucsG. Reductive release of the completed aminoacyl polyketide from the assembly line can form the 3-pyrrolin-2-one structure via an intramolecular Knoevenagel reaction. Because ucsA lacks a designated enoylreductase (ER) domain, the required activity is provided the enoyl reductase ucsL. This keto acyclic precursor is the substrate of the Diels-Alderase ucsH, that catalyzes the Diels-Alder cycloaddition. Oxidation of the 3S-methyl group to a carboxylate by the cytochrome P450 monooxygenase ucsK allows an oxa-Michael cyclization that might involve the reductase/dehydrogenase ucsI and which furnishes the furopyrrolizidine. The oxidase ucsJ likely plays a critical role in stereoselective reduction of the C5-C6 double bond to afford the required R-configured carboxylate group. Further enolization and oxidation at C5 by an unidentified enzyme affords the last intermediate that can undergo oxa-Michael cyclization to yield UCS1025A. The chain is Pyrroline-5-carboxylate reductase ucsG from Acremonium sp.